Consider the following 364-residue polypeptide: Aminomethyltransferase (364 aa).

The protein belongs to the GcvT family. The glycine cleavage system is composed of four proteins: P, T, L and H.

It catalyses the reaction N(6)-[(R)-S(8)-aminomethyldihydrolipoyl]-L-lysyl-[protein] + (6S)-5,6,7,8-tetrahydrofolate = N(6)-[(R)-dihydrolipoyl]-L-lysyl-[protein] + (6R)-5,10-methylene-5,6,7,8-tetrahydrofolate + NH4(+). Its function is as follows. The glycine cleavage system catalyzes the degradation of glycine. This is Aminomethyltransferase from Shewanella denitrificans (strain OS217 / ATCC BAA-1090 / DSM 15013).